The sequence spans 370 residues: UDP-N-acetylglucosamine--N-acetylmuramyl-(pentapeptide) pyrophosphoryl-undecaprenol N-acetylglucosamine transferase (370 aa).

Residues 15–17, Asn129, Arg170, Ser199, Ile254, and Gln299 each bind UDP-N-acetyl-alpha-D-glucosamine; that span reads TGG.

Belongs to the glycosyltransferase 28 family. MurG subfamily.

It localises to the cell inner membrane. The enzyme catalyses di-trans,octa-cis-undecaprenyl diphospho-N-acetyl-alpha-D-muramoyl-L-alanyl-D-glutamyl-meso-2,6-diaminopimeloyl-D-alanyl-D-alanine + UDP-N-acetyl-alpha-D-glucosamine = di-trans,octa-cis-undecaprenyl diphospho-[N-acetyl-alpha-D-glucosaminyl-(1-&gt;4)]-N-acetyl-alpha-D-muramoyl-L-alanyl-D-glutamyl-meso-2,6-diaminopimeloyl-D-alanyl-D-alanine + UDP + H(+). It participates in cell wall biogenesis; peptidoglycan biosynthesis. Functionally, cell wall formation. Catalyzes the transfer of a GlcNAc subunit on undecaprenyl-pyrophosphoryl-MurNAc-pentapeptide (lipid intermediate I) to form undecaprenyl-pyrophosphoryl-MurNAc-(pentapeptide)GlcNAc (lipid intermediate II). This is UDP-N-acetylglucosamine--N-acetylmuramyl-(pentapeptide) pyrophosphoryl-undecaprenol N-acetylglucosamine transferase from Magnetococcus marinus (strain ATCC BAA-1437 / JCM 17883 / MC-1).